The chain runs to 211 residues: Hypoxanthine-guanine phosphoribosyltransferase (211 aa).

The segment at 1 to 20 (MSNSAKSPSGPVGDEGRRNY) is disordered. Residues Lys66, 125 to 133 (EDIVDSAIT), Lys157, and Asp185 each bind GMP. The active-site Proton acceptor is Asp129. Asp185 contributes to the Mg(2+) binding site.

The protein belongs to the purine/pyrimidine phosphoribosyltransferase family. It depends on Mg(2+) as a cofactor.

The protein resides in the cytoplasm. The catalysed reaction is IMP + diphosphate = hypoxanthine + 5-phospho-alpha-D-ribose 1-diphosphate. The enzyme catalyses GMP + diphosphate = guanine + 5-phospho-alpha-D-ribose 1-diphosphate. The protein operates within purine metabolism; IMP biosynthesis via salvage pathway; IMP from hypoxanthine: step 1/1. Functionally, converts guanine to guanosine monophosphate, and hypoxanthine to inosine monophosphate. Transfers the 5-phosphoribosyl group from 5-phosphoribosylpyrophosphate onto the purine. Plays a central role in the generation of purine nucleotides through the purine salvage pathway. The protein is Hypoxanthine-guanine phosphoribosyltransferase of Leishmania donovani.